The sequence spans 212 residues: ER lumen protein-retaining receptor 1 (212 aa).

The Lumenal segment spans residues 1–4; the sequence is MNLF. A helical membrane pass occupies residues 5 to 24; that stretch reads RFLGDLSHLLAIILLLLKIW. Residues 25-32 lie on the Cytoplasmic side of the membrane; sequence KSRSCAGI. The chain crosses the membrane as a helical span at residues 33-52; the sequence is SGKSQVLFAVVFTARYLDLF. The interaction with the K-D-E-L motif on target proteins stretch occupies residues 47–48; sequence RY. Residues 53 to 58 lie on the Lumenal side of the membrane; sequence TNYISL. A helical transmembrane segment spans residues 59-79; sequence YNTCMKVVYIACSFTTVWLIY. The Cytoplasmic portion of the chain corresponds to 80–92; the sequence is SKFKATYDGNHDT. The helical transmembrane segment at 93–110 threads the bilayer; sequence FRVEFLVVPTAILAFLVN. Residues 111–116 are Lumenal-facing; sequence HDFTPL. The chain crosses the membrane as a helical span at residues 117-135; sequence EILWTFSIYLESVAILPQL. The Cytoplasmic segment spans residues 136–149; sequence FMVSKTGEAETITS. A helical membrane pass occupies residues 150 to 168; the sequence is HYLFALGVYRTLYLFNWIW. Residues 159–169 form an interaction with the K-D-E-L motif on target proteins region; it reads RTLYLFNWIWR. The Lumenal segment spans residues 169 to 178; that stretch reads RYHFEGFFDL. A helical transmembrane segment spans residues 179–199; sequence IAIVAGLVQTVLYCDFFYLYI. Residues 200-212 are Cytoplasmic-facing; the sequence is TKVLKGKKLSLPA. The tract at residues 204 to 207 is important for recycling of cargo proteins with the sequence motif K-D-E-L from the Golgi to the endoplasmic reticulum; sequence KGKK. The residue at position 209 (Ser209) is a Phosphoserine; by PKA.

It belongs to the ERD2 family. In terms of assembly, upon ligand binding the receptor oligomerizes and interacts with components of the transport machinery such as ARFGAP1 and ARF1. Phosphorylation by PKA at Ser-209 is required for endoplasmic reticulum retention function.

It is found in the golgi apparatus membrane. The protein resides in the cytoplasmic vesicle. Its subcellular location is the COPI-coated vesicle membrane. It localises to the endoplasmic reticulum membrane. The protein localises to the endoplasmic reticulum-Golgi intermediate compartment membrane. Its function is as follows. Receptor for the C-terminal sequence motif K-D-E-L that is present on endoplasmic reticulum resident proteins and that mediates their recycling from the Golgi back to the endoplasmic reticulum. The chain is ER lumen protein-retaining receptor 1 (KDELR1) from Homo sapiens (Human).